The following is a 413-amino-acid chain: CinA-like protein (413 aa).

The protein belongs to the CinA family.

This chain is CinA-like protein, found in Geotalea daltonii (strain DSM 22248 / JCM 15807 / FRC-32) (Geobacter daltonii).